We begin with the raw amino-acid sequence, 255 residues long: F-box/SPRY domain-containing protein 1 (255 aa).

In terms of domain architecture, F-box spans 3–51; it reads DPVAALCNYNVLEVIFSYLELDDLSHCSQVCKSWYHFLNDENSDVWRWH. A B30.2/SPRY domain is found at 61 to 253; that stretch reads LKSDLLSSVP…VSMVYLGTPL (193 aa).

The protein belongs to the FBXO45/Fsn family. As to quaternary structure, component of an E3 ubiquitin ligase complex composed of hiw and Fsn.

Its subcellular location is the synapse. Its pathway is protein modification; protein ubiquitination. In terms of biological role, required in the presynaptic motoneuron to down-regulate the levels of wnd and restrain synaptic terminal growth at the neuromuscular junction (NMJ). The polypeptide is F-box/SPRY domain-containing protein 1 (Drosophila sechellia (Fruit fly)).